The primary structure comprises 769 residues: Serine/threonine-protein kinase PLK4 (769 aa).

In terms of domain architecture, Protein kinase spans 14-267 (YEVQHLLGKG…LEAVLCHPFM (254 aa)). ATP-binding positions include 20 to 28 (LGKGGFATV) and lysine 43. The Proton acceptor role is filled by aspartate 138. Residues 381-498 (EDRISVPPLN…ARFVGLVKSK (118 aa)) form the Cryptic POLO box 1 (CPB1) domain. The region spanning 499–602 (TPKVTYFSTL…GRRPITDVQP (104 aa)) is the Cryptic POLO box 2 (CPB2) domain. A POLO box domain is found at 660-739 (PIKRINVPDI…IPNIQLKLKT (80 aa)).

Belongs to the protein kinase superfamily. Ser/Thr protein kinase family. CDC5/Polo subfamily. In terms of assembly, homodimer. Post-translationally, ubiquitinated by the SCF(Slimb) ubiquitin ligase complex; leading to its degradation by the proteasome during interphase and regulating centriole number and ensuring the block to centriole reduplication.

The protein resides in the cytoplasm. It is found in the cytoskeleton. Its subcellular location is the microtubule organizing center. It localises to the centrosome. The protein localises to the centriole. It carries out the reaction L-seryl-[protein] + ATP = O-phospho-L-seryl-[protein] + ADP + H(+). It catalyses the reaction L-threonyl-[protein] + ATP = O-phospho-L-threonyl-[protein] + ADP + H(+). Serine/threonine-protein kinase that plays a central role in centriole duplication. Able to trigger procentriole formation on the surface of the mother centriole cylinder, using mother centriole as a platform, leading to the recruitment of centriole biogenesis proteins such as sas-6. When overexpressed, it is able to induce centrosome amplification through the simultaneous generation of multiple procentrioles adjoining each parental centriole during S phase. Centrosome amplification following overexpression can initiate tumorigenesis, highlighting the importance of centrosome regulation in cancers. The sequence is that of Serine/threonine-protein kinase PLK4 (SAK) from Drosophila simulans (Fruit fly).